The sequence spans 272 residues: Orotidine 5'-phosphate decarboxylase (272 aa).

Residue lysine 96 is the Proton donor of the active site.

Belongs to the OMP decarboxylase family. Type 2 subfamily.

It catalyses the reaction orotidine 5'-phosphate + H(+) = UMP + CO2. It functions in the pathway pyrimidine metabolism; UMP biosynthesis via de novo pathway; UMP from orotate: step 2/2. The chain is Orotidine 5'-phosphate decarboxylase from Christiangramia forsetii (strain DSM 17595 / CGMCC 1.15422 / KT0803) (Gramella forsetii).